The primary structure comprises 428 residues: Elongation factor 1-alpha (428 aa).

The tr-type G domain maps to 5-217 (KPHVNIVFIG…DQIPEPEKPI (213 aa)). Residues 14–21 (GHVDHGKS) are G1. 14 to 21 (GHVDHGKS) is a binding site for GTP. Residue Ser21 coordinates Mg(2+). The segment at 68-72 (GITID) is G2. The segment at 89–92 (DAPG) is G3. GTP is bound by residues 89 to 93 (DAPGH) and 144 to 147 (NKMD). The G4 stretch occupies residues 144-147 (NKMD). A G5 region spans residues 181-183 (SAW).

Belongs to the TRAFAC class translation factor GTPase superfamily. Classic translation factor GTPase family. EF-Tu/EF-1A subfamily.

The protein resides in the cytoplasm. The catalysed reaction is GTP + H2O = GDP + phosphate + H(+). In terms of biological role, GTP hydrolase that promotes the GTP-dependent binding of aminoacyl-tRNA to the A-site of ribosomes during protein biosynthesis. This Pyrococcus horikoshii (strain ATCC 700860 / DSM 12428 / JCM 9974 / NBRC 100139 / OT-3) protein is Elongation factor 1-alpha.